The chain runs to 590 residues: Polypeptide N-acetylgalactosaminyltransferase 8 (590 aa).

At M1–K11 the chain is on the cytoplasmic side. The chain crosses the membrane as a helical; Signal-anchor for type II membrane protein span at residues V12–L31. Topologically, residues K32–Q590 are lumenal. N77 carries an N-linked (GlcNAc...) asparagine glycan. 5 disulfide bridges follow: C117–C345, C336–C419, C459–C475, C502–C517, and C546–C561. The catalytic subdomain A stretch occupies residues L127 to P236. D168 contributes to the substrate binding site. Mn(2+) is bound at residue D220. S221 contributes to the substrate binding site. H222 contacts Mn(2+). N-linked (GlcNAc...) asparagine glycosylation occurs at N241. A catalytic subdomain B region spans residues P291–R353. W322 is a substrate binding site. H350 contributes to the Mn(2+) binding site. R353 contributes to the substrate binding site. The Ricin B-type lectin domain maps to A446–G573.

It belongs to the glycosyltransferase 2 family. GalNAc-T subfamily. Mn(2+) is required as a cofactor. In terms of tissue distribution, expressed in developing oocytes and egg chambers. During embryonic stages 9-11, expressed in the primordium of the foregut, midgut and hindgut. During embryonic stages 12-13, expressed in the posterior midgut and hindgut. During embryonic stages 14-15, expression continues in the hindgut. No expression detected during embryonic stages 16-17 or in third instar larvae imaginal disks.

Its subcellular location is the golgi apparatus membrane. It catalyses the reaction L-seryl-[protein] + UDP-N-acetyl-alpha-D-galactosamine = a 3-O-[N-acetyl-alpha-D-galactosaminyl]-L-seryl-[protein] + UDP + H(+). The catalysed reaction is L-threonyl-[protein] + UDP-N-acetyl-alpha-D-galactosamine = a 3-O-[N-acetyl-alpha-D-galactosaminyl]-L-threonyl-[protein] + UDP + H(+). It participates in protein modification; protein glycosylation. In terms of biological role, catalyzes the initial reaction in O-linked oligosaccharide biosynthesis, the transfer of an N-acetyl-D-galactosamine residue to a serine or threonine residue on the protein receptor. It can both act as a peptide transferase that transfers GalNAc onto unmodified peptide substrates, and as a glycopeptide transferase that requires the prior addition of a GalNAc on a peptide before adding additional GalNAc moieties. Prefers both EA2 and the diglycosylated Muc5AC-3/13 as substrates, albeit at very low levels fro Muc5AC-3/13. This Drosophila melanogaster (Fruit fly) protein is Polypeptide N-acetylgalactosaminyltransferase 8.